Reading from the N-terminus, the 46-residue chain is Large ribosomal subunit protein bL34 (46 aa).

It belongs to the bacterial ribosomal protein bL34 family.

The chain is Large ribosomal subunit protein bL34 from Synechococcus sp. (strain JA-2-3B'a(2-13)) (Cyanobacteria bacterium Yellowstone B-Prime).